The chain runs to 340 residues: Tryptophan--tRNA ligase (340 aa).

Residues 11 to 13 (RPT) and 19 to 20 (GH) each bind ATP. The 'HIGH' region signature appears at 12–20 (PTGKLHLGH). Position 140 (aspartate 140) interacts with L-tryptophan. ATP contacts are provided by residues 152 to 154 (GND), leucine 194, and 202 to 206 (KMSKS). A 'KMSKS' region motif is present at residues 202–206 (KMSKS).

The protein belongs to the class-I aminoacyl-tRNA synthetase family. As to quaternary structure, homodimer.

Its subcellular location is the cytoplasm. It carries out the reaction tRNA(Trp) + L-tryptophan + ATP = L-tryptophyl-tRNA(Trp) + AMP + diphosphate + H(+). Functionally, catalyzes the attachment of tryptophan to tRNA(Trp). The polypeptide is Tryptophan--tRNA ligase (Streptococcus mutans serotype c (strain ATCC 700610 / UA159)).